A 672-amino-acid polypeptide reads, in one-letter code: APC membrane recruitment protein 2 (672 aa).

Over residues 1-21 the composition is skewed to gly residues; that stretch reads METGRSRGGGAAVSERGGGAR. Disordered regions lie at residues 1–23, 74–360, and 443–560; these read METGRSRGGGAAVSERGGGARAG, TMPS…DPSA, and MLSQ…DALC. A compositionally biased stretch (low complexity) spans 142-158; sequence GSLASSSVAKSHSFFSL. Residue serine 154 is modified to Phosphoserine. Basic and acidic residues-rich tracts occupy residues 163-175 and 201-210; these read GRSETGKGDHAEA and RGKEEEEKAV. A phosphoserine mark is found at serine 223, serine 227, and serine 244. Over residues 230 to 254 the composition is skewed to basic and acidic residues; it reads CVKEEPPRAARRPDSPGQDASRHAA. The span at 255-269 shows a compositional bias: low complexity; the sequence is GEPAGGEQAPASAES. Serine 284 bears the Phosphoserine mark. The span at 289 to 303 shows a compositional bias: basic and acidic residues; sequence SRGEDAEGHRREEKP. The span at 343–354 shows a compositional bias: low complexity; the sequence is ASAVPDPSSVDP. Serine 356 and serine 359 each carry phosphoserine. The segment covering 446–457 has biased composition (low complexity); it reads QTEDQGQGTQEG. Composition is skewed to basic and acidic residues over residues 478 to 488 and 502 to 516; these read RCGEAAKDMSS and QQKEEPKHPEKEHQE.

The protein belongs to the Amer family. Interacts with APC.

It localises to the cell membrane. Its function is as follows. Negative regulator of the canonical Wnt signaling pathway involved in neuroectodermal patterning. Acts by specifically binding phosphatidylinositol 4,5-bisphosphate (PtdIns(4,5)P2), translocating to the cell membrane and interacting with key regulators of the canonical Wnt signaling pathway, such as components of the beta-catenin destruction complex. This Mus musculus (Mouse) protein is APC membrane recruitment protein 2 (Amer2).